Reading from the N-terminus, the 285-residue chain is Polyamine aminopropyltransferase (285 aa).

A PABS domain is found at 5 to 238 (EMWYETLHTG…GIMTFAWASD (234 aa)). Gln33 provides a ligand contact to S-methyl-5'-thioadenosine. Spermidine-binding residues include His64 and Asp88. S-methyl-5'-thioadenosine is bound by residues Glu108 and 140–141 (DG). The Proton acceptor role is filled by Asp158. Residue 158–161 (DCTD) coordinates spermidine. Pro165 is an S-methyl-5'-thioadenosine binding site.

This sequence belongs to the spermidine/spermine synthase family. As to quaternary structure, homodimer or homotetramer.

Its subcellular location is the cytoplasm. The catalysed reaction is S-adenosyl 3-(methylsulfanyl)propylamine + putrescine = S-methyl-5'-thioadenosine + spermidine + H(+). Its pathway is amine and polyamine biosynthesis; spermidine biosynthesis; spermidine from putrescine: step 1/1. Its function is as follows. Catalyzes the irreversible transfer of a propylamine group from the amino donor S-adenosylmethioninamine (decarboxy-AdoMet) to putrescine (1,4-diaminobutane) to yield spermidine. This chain is Polyamine aminopropyltransferase, found in Erwinia tasmaniensis (strain DSM 17950 / CFBP 7177 / CIP 109463 / NCPPB 4357 / Et1/99).